A 401-amino-acid chain; its full sequence is MAFLSLFLCLVFSSPLMAMPPALQGRKAISPASILKGPSTDNGARDFHGRKFPHFMMQLYQNIISRRDKDLSNLEHPTLQESDTVQSFIAKSYTTKGNHWTLFFDMSSISTSNELKSAELRICLPSFGKSHSVTVEIYHTKDDKEKLFMGSFKTKISSALDADCKVFNLTMVLHNYLTKGKRLIKDEYIQAKGLLLRDLEKSATETGAERVDIVKQDKHHVSDFSAERIILVVFAKEKDHAKPDPPSLGKKLFPSKYGMADSANKVNGFRRLRRNKKEKTRMDVGTTPPKPVEEIKPKCRKVDMFVDFQKIGWGSWIVYPKAYNAYRCESACAVPLNETDDATNYSYIKSLLPLSDTDRRECPSCVPVKMRSMSMLYYENEDFVLRHHEEMIVEECGYKDI.

The N-terminal stretch at 1–18 is a signal peptide; it reads MAFLSLFLCLVFSSPLMA. Residues 19–274 constitute a propeptide that is removed on maturation; it reads MPPALQGRKA…KVNGFRRLRR (256 aa). N-linked (GlcNAc...) asparagine glycans are attached at residues N168, N337, and N344. 2 disulfides stabilise this stretch: C299/C365 and C328/C396.

The protein belongs to the TGF-beta family. As to quaternary structure, monomer. The propeptide region interacts with bmp4 in a non-covalent manner. As to expression, expressed in the dorsal marginal region of late blastula, becoming restricted to the Spemann organizer at the early gastrula stage.

It localises to the secreted. Exhibits mesoderm-dorsalizing activity and neural-inducing activity, but lacks mesoderm-inducing activity. Regulates the expression of specific mesodermal and neural genes. Induces convergent extension movements at the embryonic midline by activating the fgf signaling pathway to induce t/bra expression in the organizer region. Acts with wnt11 to induce Spemann organizer cells and induce axis formation. The unprocessed protein antagonizes bmp-signaling. This is Nodal homolog 3-C from Xenopus tropicalis (Western clawed frog).